The following is a 307-amino-acid chain: MLPFTLQQLRILKAVATEKNFTKAAELLYLSQPSLSKQIKTLEKNLDILLVNRENNKISLTENGKIFLQYSERILALCEESCRALIDLKNGERGSLTVGASQTIGTYLMPRVLALFAQNYPQIDLKVQVNSTRIVAKNILNREIDIAVVGGEIPLDLKKNLTVEKFVEDEFSLIIPKSHPFANKKIVTKEDLYHLNFISLNSNSTIRKFIDNILIQNQIDTKQLKIIMQLNSIEAIKTAVSLGQGAAFVSSAAIEKEIELKTIEILKIENIRITRTLSIISNSESYKSKAFEFFSNELKKLKNEIEN.

In terms of domain architecture, HTH lysR-type spans 4 to 61; the sequence is FTLQQLRILKAVATEKNFTKAAELLYLSQPSLSKQIKTLEKNLDILLVNRENNKISLT. Residues 21 to 40 constitute a DNA-binding region (H-T-H motif); it reads FTKAAELLYLSQPSLSKQIK.

The protein belongs to the LysR transcriptional regulatory family.

The protein localises to the plastid. It localises to the chloroplast. Its function is as follows. Trans-acting transcriptional regulator of RuBisCO genes (rbcL and rbcS) expression. This is Probable RuBisCO transcriptional regulator (rbcR) from Phaeodactylum tricornutum (strain CCAP 1055/1).